The chain runs to 582 residues: ATP-dependent lipid A-core flippase (582 aa).

The next 5 membrane-spanning stretches (helical) occupy residues 16-36, 63-83, 153-173, 253-273, and 275-295; these read LWPTIAPFKAGLIVAGVALIL, VLVWMPLVVIGLMILRGITSY, IIGLFIMMFYYSWQLSIILIV, PIIQLIASLALAFVLYAASFP, and VMDNLTAGTITVVFSSMIALM. The ABC transmembrane type-1 domain occupies 28–310; sequence IVAGVALILN…LTNVNAQFQR (283 aa). In terms of domain architecture, ABC transporter spans 342–578; it reads VEFRNVTFTY…RGVYAQLHKM (237 aa). ATP is bound at residue 376–383; it reads GRSGSGKS.

The protein belongs to the ABC transporter superfamily. Lipid exporter (TC 3.A.1.106) family. As to quaternary structure, homodimer.

It localises to the cell inner membrane. It catalyses the reaction ATP + H2O + lipid A-core oligosaccharideSide 1 = ADP + phosphate + lipid A-core oligosaccharideSide 2.. Functionally, involved in lipopolysaccharide (LPS) biosynthesis. Translocates lipid A-core from the inner to the outer leaflet of the inner membrane. Transmembrane domains (TMD) form a pore in the inner membrane and the ATP-binding domain (NBD) is responsible for energy generation. This chain is ATP-dependent lipid A-core flippase, found in Shigella sonnei (strain Ss046).